The primary structure comprises 545 residues: Glucans biosynthesis protein G (545 aa).

The signal sequence occupies residues 1 to 34; that stretch reads MVSLLRCQSFKPSSSLICSLALSAAFALSSSAFA. Positions 38-60 are disordered; that stretch reads KPAENKPATPVVSPPKATAQPAN.

Belongs to the OpgD/OpgG family.

It localises to the periplasm. The protein operates within glycan metabolism; osmoregulated periplasmic glucan (OPG) biosynthesis. Involved in the biosynthesis of osmoregulated periplasmic glucans (OPGs). The protein is Glucans biosynthesis protein G of Shewanella sp. (strain MR-4).